Consider the following 160-residue polypeptide: Cyclic pyranopterin monophosphate synthase (160 aa).

Substrate contacts are provided by residues 73 to 75 (LCH) and 110 to 111 (ME). Asp125 is a catalytic residue.

The protein belongs to the MoaC family. In terms of assembly, homohexamer; trimer of dimers.

It catalyses the reaction (8S)-3',8-cyclo-7,8-dihydroguanosine 5'-triphosphate = cyclic pyranopterin phosphate + diphosphate. The protein operates within cofactor biosynthesis; molybdopterin biosynthesis. Its function is as follows. Catalyzes the conversion of (8S)-3',8-cyclo-7,8-dihydroguanosine 5'-triphosphate to cyclic pyranopterin monophosphate (cPMP). The polypeptide is Cyclic pyranopterin monophosphate synthase (Pseudomonas paraeruginosa (strain DSM 24068 / PA7) (Pseudomonas aeruginosa (strain PA7))).